The sequence spans 82 residues: Small ribosomal subunit protein bS16 (82 aa).

Belongs to the bacterial ribosomal protein bS16 family.

The sequence is that of Small ribosomal subunit protein bS16 from Blochmanniella floridana.